The sequence spans 138 residues: Cysteine desulfuration protein SufE (138 aa).

Cys-51 serves as the catalytic Cysteine persulfide intermediate.

The protein belongs to the SufE family. In terms of assembly, homodimer. Interacts with SufS.

Its subcellular location is the cytoplasm. Its pathway is cofactor biosynthesis; iron-sulfur cluster biosynthesis. Participates in cysteine desulfuration mediated by SufS. Cysteine desulfuration mobilizes sulfur from L-cysteine to yield L-alanine and constitutes an essential step in sulfur metabolism for biosynthesis of a variety of sulfur-containing biomolecules. Functions as a sulfur acceptor for SufS, by mediating the direct transfer of the sulfur atom from the S-sulfanylcysteine of SufS, an intermediate product of cysteine desulfuration process. This is Cysteine desulfuration protein SufE from Citrobacter koseri (strain ATCC BAA-895 / CDC 4225-83 / SGSC4696).